Here is a 280-residue protein sequence, read N- to C-terminus: MSLVTSLTYVLPHRLLSSLARALAYSQTPSTKQWLIDTVTRKFGVDLSEAQEPDPHAYPTFNAFFTRALKPGARVPDADPSAVLMPADGRISQLGPVENGRIFQAKGQSFTAAELLGDEAAAAPFNDGVFATVYLSPKDYHRVHMPWTGTLRETVHVPGRLFSVGPDAVRKVPRLFARNERLVCHFDTEFGPMASVMVGALLVSGVETVWSGVEIPRYGDRITRKDYRGKGVVLEKFAEMARFNYGSTVIVLLPPGVATLDGGLAAETSVRLGQALARRQ.

Catalysis depends on charge relay system; for autoendoproteolytic cleavage activity residues D88, H144, and S247. Catalysis depends on S247, which acts as the Schiff-base intermediate with substrate; via pyruvic acid; for decarboxylase activity. S247 bears the Pyruvic acid (Ser); by autocatalysis mark.

This sequence belongs to the phosphatidylserine decarboxylase family. PSD-B subfamily. Prokaryotic type I sub-subfamily. As to quaternary structure, heterodimer of a large membrane-associated beta subunit and a small pyruvoyl-containing alpha subunit. It depends on pyruvate as a cofactor. Is synthesized initially as an inactive proenzyme. Formation of the active enzyme involves a self-maturation process in which the active site pyruvoyl group is generated from an internal serine residue via an autocatalytic post-translational modification. Two non-identical subunits are generated from the proenzyme in this reaction, and the pyruvate is formed at the N-terminus of the alpha chain, which is derived from the carboxyl end of the proenzyme. The autoendoproteolytic cleavage occurs by a canonical serine protease mechanism, in which the side chain hydroxyl group of the serine supplies its oxygen atom to form the C-terminus of the beta chain, while the remainder of the serine residue undergoes an oxidative deamination to produce ammonia and the pyruvoyl prosthetic group on the alpha chain. During this reaction, the Ser that is part of the protease active site of the proenzyme becomes the pyruvoyl prosthetic group, which constitutes an essential element of the active site of the mature decarboxylase.

It is found in the cell membrane. The enzyme catalyses a 1,2-diacyl-sn-glycero-3-phospho-L-serine + H(+) = a 1,2-diacyl-sn-glycero-3-phosphoethanolamine + CO2. The protein operates within phospholipid metabolism; phosphatidylethanolamine biosynthesis; phosphatidylethanolamine from CDP-diacylglycerol: step 2/2. Its function is as follows. Catalyzes the formation of phosphatidylethanolamine (PtdEtn) from phosphatidylserine (PtdSer). The chain is Phosphatidylserine decarboxylase proenzyme from Xanthomonas axonopodis pv. citri (strain 306).